Consider the following 215-residue polypeptide: 3-isopropylmalate dehydratase small subunit (215 aa).

It belongs to the LeuD family. LeuD type 1 subfamily. Heterodimer of LeuC and LeuD.

It carries out the reaction (2R,3S)-3-isopropylmalate = (2S)-2-isopropylmalate. It functions in the pathway amino-acid biosynthesis; L-leucine biosynthesis; L-leucine from 3-methyl-2-oxobutanoate: step 2/4. In terms of biological role, catalyzes the isomerization between 2-isopropylmalate and 3-isopropylmalate, via the formation of 2-isopropylmaleate. The chain is 3-isopropylmalate dehydratase small subunit from Ectopseudomonas mendocina (strain ymp) (Pseudomonas mendocina).